The following is a 382-amino-acid chain: F-box protein At3g27290 (382 aa).

An F-box domain is found at arginine 16–serine 105.

This Arabidopsis thaliana (Mouse-ear cress) protein is F-box protein At3g27290.